We begin with the raw amino-acid sequence, 530 residues long: ATP-dependent RNA helicase DBP3 (530 aa).

Residues 1–20 (MSKDEIKDKKRKSEEYEVVD) show a composition bias toward basic and acidic residues. Positions 1–77 (MSKDEIKDKK…VASVSTSSTV (77 aa)) are disordered. The stretch at 19–58 (VDKKKHKKDKKDKKEKKDKKEKKLKKDKKDKKDKKETKSE) forms a coiled coil. Over residues 21–50 (KKKHKKDKKDKKEKKDKKEKKLKKDKKDKK) the composition is skewed to basic residues. Residues 67 to 77 (SVASVSTSSTV) are compositionally biased toward low complexity. The Q motif motif lies at 117–143 (LSFSHISLDSRIQAEISKFPKPTPIQA). In terms of domain architecture, Helicase ATP-binding spans 146 to 322 (WPYLLAGKDV…STFMNSPIKV (177 aa)). 159–166 (AETGSGKT) provides a ligand contact to ATP. The DEAD box signature appears at 269-272 (DEAD). The 150-residue stretch at 351 to 500 (KLLELLKKYQ…PVPEELKKFG (150 aa)) folds into the Helicase C-terminal domain.

Belongs to the DEAD box helicase family. DDX5/DBP2 subfamily.

It localises to the nucleus. The protein resides in the nucleolus. The enzyme catalyses ATP + H2O = ADP + phosphate + H(+). Its function is as follows. ATP-dependent RNA helicase required for 60S ribosomal subunit synthesis. Involved in efficient pre-rRNA processing, predominantly at site A3, which is necessary for the normal formation of 25S and 5.8S rRNAs. The chain is ATP-dependent RNA helicase DBP3 (DBP3) from Vanderwaltozyma polyspora (strain ATCC 22028 / DSM 70294 / BCRC 21397 / CBS 2163 / NBRC 10782 / NRRL Y-8283 / UCD 57-17) (Kluyveromyces polysporus).